The primary structure comprises 137 residues: Peptide methionine sulfoxide reductase MsrB (137 aa).

Residues 7–129 form the MsrB domain; it reads AEELKKKLSE…NSASLAFSDE (123 aa). The Zn(2+) site is built by cysteine 46, cysteine 49, cysteine 95, and cysteine 98. Residue cysteine 118 is the Nucleophile of the active site.

Belongs to the MsrB Met sulfoxide reductase family. Zn(2+) serves as cofactor.

It carries out the reaction L-methionyl-[protein] + [thioredoxin]-disulfide + H2O = L-methionyl-(R)-S-oxide-[protein] + [thioredoxin]-dithiol. The sequence is that of Peptide methionine sulfoxide reductase MsrB from Salmonella dublin (strain CT_02021853).